The sequence spans 553 residues: PE cleavage protein A (553 aa).

Residues 1 to 92 (MSLLVVAPEW…SAGSYSAAEA (92 aa)) form the PE domain. Asp293 is a catalytic residue.

Belongs to the mycobacterial PE family. PGRS subfamily. Undergoes auto-proteolytic processing.

The protein localises to the secreted. Its subcellular location is the cell surface. Its function is as follows. Aspartic protease that processes the lipase LipY and other PE_PGRS proteins. Can also cleave itself. Cleaves LipY both inside the PE domain, before amino acid 98, and after amino acids 136 and 149. Involved in virulence. The chain is PE cleavage protein A from Mycobacterium marinum (strain ATCC BAA-535 / M).